Consider the following 540-residue polypeptide: NAD(P)H-quinone oxidoreductase subunit 2 B, chloroplastic (540 aa).

Transmembrane regions (helical) follow at residues 24–44, 57–77, 99–119, 124–144, 149–169, 183–203, 227–247, 325–345, 353–373, 384–404, 425–445, 448–468, and 514–534; these read LLLFDGSLIFPECILIFGLIL, IPWLYFIPSTSLVMSITALLF, IFQFLILLCSTLCIPLSVEYI, MAITEFLLFVLTATLGGMFLC, FITIFVAPECFSLCSYLLSGY, YLLMGGASSSILVHGFSWLYG, PGISIALIFITVGIGFKLSPA, WHLLLEILAILSMILGNLIAI, MLAYSSIGQIGYVIIGIIVGD, YMLFYISMNLGTFACIVLFGL, ALSLALCLLSLGGLPPLAGFF, LYLFWCGWQAGLYFLVLIGLL, and MIVCVIASTIPGISMNPIIAI.

This sequence belongs to the complex I subunit 2 family. NDH is composed of at least 16 different subunits, 5 of which are encoded in the nucleus.

Its subcellular location is the plastid. The protein localises to the chloroplast thylakoid membrane. The enzyme catalyses a plastoquinone + NADH + (n+1) H(+)(in) = a plastoquinol + NAD(+) + n H(+)(out). The catalysed reaction is a plastoquinone + NADPH + (n+1) H(+)(in) = a plastoquinol + NADP(+) + n H(+)(out). In terms of biological role, NDH shuttles electrons from NAD(P)H:plastoquinone, via FMN and iron-sulfur (Fe-S) centers, to quinones in the photosynthetic chain and possibly in a chloroplast respiratory chain. The immediate electron acceptor for the enzyme in this species is believed to be plastoquinone. Couples the redox reaction to proton translocation, and thus conserves the redox energy in a proton gradient. The chain is NAD(P)H-quinone oxidoreductase subunit 2 B, chloroplastic from Coffea arabica (Arabian coffee).